The following is a 443-amino-acid chain: Transcriptional adapter 2-alpha (443 aa).

At Ser-6 the chain carries Phosphoserine. Residues 12–69 (SDKPPCRGCSSYLTEPYIKCAECGPPPFFLCLQCFTRGFEYKKHQSDHTYEIMTSDFP) form a ZZ-type zinc finger. Residues Cys-17, Cys-20, Cys-31, Cys-34, Cys-42, Cys-45, His-55, and His-59 each contribute to the Zn(2+) site. The region spanning 70-122 (VLDPSWTAQEEMALLEAVMDCGFGNWQDVANQMCTKTKEECEKHYMKHFINNP) is the SANT domain. Residues Lys-132 and Lys-138 each participate in a glycyl lysine isopeptide (Lys-Gly) (interchain with G-Cter in SUMO2) cross-link. Positions 356–443 (NSGRRSAPPL…LIREGYITKA (88 aa)) constitute an SWIRM domain. A DNA-binding region spans residues 426 to 435 (KTRKIYDFLI).

Interacts with GCN5. Interacts with NR3C1. Associated with the P/CAF protein in the PCAF complex. Component of the PCAF complex, at least composed of TADA2L/ADA2, TADA3L/ADA3, TAF5L/PAF65-beta, TAF6L/PAF65-alpha, TAF10/TAFII30, TAF12/TAFII20, TAF9/TAFII31 and TRRAP. Component of the ADA2A-containing complex (ATAC), composed of KAT14, KAT2A, TADA2L, TADA3L, ZZ3, MBIP, WDR5, YEATS2, CCDC101 and DR1. Interacts with CCDC134.

Its subcellular location is the nucleus. The protein resides in the chromosome. In terms of biological role, component of the ATAC complex, a complex with histone acetyltransferase activity on histones H3 and H4. Required for the function of some acidic activation domains, which activate transcription from a distant site. Binds double-stranded DNA. Binds dinucleosomes, probably at the linker region between neighboring nucleosomes. Plays a role in chromatin remodeling. May promote TP53/p53 'Lys-321' acetylation, leading to reduced TP53 stability and transcriptional activity. May also promote XRCC6 acetylation thus facilitating cell apoptosis in response to DNA damage. The chain is Transcriptional adapter 2-alpha (Tada2a) from Mus musculus (Mouse).